The following is a 264-amino-acid chain: MKSYLVLLKKILKEGSNRKDRTGIGTLSVFGYHMEFNLKLGFPLITTKKCHFPAIVHELLWFLKGDTNIKYLNDHNISIWNPWADERGYLGPIYGEQWRSWKTKDGRVIDQIDNVIHLIKNNPNSRRIVVSSWNVGDLHKMALLPCHVLFQFHVVDHVLHCQLYQRSCDVFLGLPFNIASYSLLTHMIAQQCNLKVGNFIWTGGDVHLYKNHIKQAKKQILRRPYLLPKLVINRKPTQIFNYLLQDFNLLNYKYHPSIHAKIAI.

Arg-21 provides a ligand contact to dUMP. Position 51 (His-51) interacts with (6R)-5,10-methylene-5,6,7,8-tetrahydrofolate. Residue 126-127 participates in dUMP binding; that stretch reads RR. The Nucleophile role is filled by Cys-146. Residues 166-169, Asn-177, and 207-209 contribute to the dUMP site; these read RSCD and HLY. A (6R)-5,10-methylene-5,6,7,8-tetrahydrofolate-binding site is contributed by Asp-169. Residue Ala-263 participates in (6R)-5,10-methylene-5,6,7,8-tetrahydrofolate binding.

It belongs to the thymidylate synthase family. Bacterial-type ThyA subfamily. Homodimer.

It is found in the cytoplasm. It carries out the reaction dUMP + (6R)-5,10-methylene-5,6,7,8-tetrahydrofolate = 7,8-dihydrofolate + dTMP. Its pathway is pyrimidine metabolism; dTTP biosynthesis. Functionally, catalyzes the reductive methylation of 2'-deoxyuridine-5'-monophosphate (dUMP) to 2'-deoxythymidine-5'-monophosphate (dTMP) while utilizing 5,10-methylenetetrahydrofolate (mTHF) as the methyl donor and reductant in the reaction, yielding dihydrofolate (DHF) as a by-product. This enzymatic reaction provides an intracellular de novo source of dTMP, an essential precursor for DNA biosynthesis. In Buchnera aphidicola subsp. Baizongia pistaciae (strain Bp), this protein is Thymidylate synthase.